The primary structure comprises 587 residues: Mitogen-activated protein kinase 4 (587 aa).

The 293-residue stretch at F20–M312 folds into the Protein kinase domain. Residues L26–V34 and K49 contribute to the ATP site. Residue D149 is the Proton acceptor of the active site. S186 is subject to Phosphoserine; by PAK1, PAK2 and PAK3. Residues S186–G188 carry the SEG motif motif. The FRIEDE motif motif lies at F328–E333. 2 stretches are compositionally biased toward basic and acidic residues: residues Q373–R383 and V395–H413. Positions Q373 to H413 are disordered. At S434 the chain carries Phosphoserine. Positions S499–S534 are disordered.

The protein belongs to the protein kinase superfamily. CMGC Ser/Thr protein kinase family. MAP kinase subfamily. In terms of assembly, homodimer. Heterodimer with ERK3/MAPK6. Interacts with (via FRIEDE motif) MAPKAPK5. Mg(2+) serves as cofactor. Post-translationally, phosphorylated at Ser-186 by PAK1, PAK2 and PAK3 resulting in catalytic activation. Phosphorylated by MAPKAPK5 at other sites. In terms of tissue distribution, high expression in heart and brain.

It is found in the cytoplasm. Its subcellular location is the nucleus. It carries out the reaction L-seryl-[protein] + ATP = O-phospho-L-seryl-[protein] + ADP + H(+). It catalyses the reaction L-threonyl-[protein] + ATP = O-phospho-L-threonyl-[protein] + ADP + H(+). Its activity is regulated as follows. Activated by phosphorylation at Ser-186. Atypical MAPK protein. Phosphorylates microtubule-associated protein 2 (MAP2) and MAPKAPK5. The precise role of the complex formed with MAPKAPK5 is still unclear, but the complex follows a complex set of phosphorylation events: upon interaction with atypical MAPKAPK5, ERK4/MAPK4 is phosphorylated at Ser-186 and then mediates phosphorylation and activation of MAPKAPK5, which in turn phosphorylates ERK4/MAPK4. May promote entry in the cell cycle. The sequence is that of Mitogen-activated protein kinase 4 (MAPK4) from Homo sapiens (Human).